Consider the following 489-residue polypeptide: N-succinylglutamate 5-semialdehyde dehydrogenase (489 aa).

224–229 contacts NAD(+); it reads GSAKVG. Catalysis depends on residues Glu-247 and Cys-281.

It belongs to the aldehyde dehydrogenase family. AstD subfamily.

The catalysed reaction is N-succinyl-L-glutamate 5-semialdehyde + NAD(+) + H2O = N-succinyl-L-glutamate + NADH + 2 H(+). Its pathway is amino-acid degradation; L-arginine degradation via AST pathway; L-glutamate and succinate from L-arginine: step 4/5. Functionally, catalyzes the NAD-dependent reduction of succinylglutamate semialdehyde into succinylglutamate. This is N-succinylglutamate 5-semialdehyde dehydrogenase from Chromohalobacter salexigens (strain ATCC BAA-138 / DSM 3043 / CIP 106854 / NCIMB 13768 / 1H11).